Reading from the N-terminus, the 197-residue chain is Nucleoside triphosphate pyrophosphatase (197 aa).

Asp71 acts as the Proton acceptor in catalysis.

It belongs to the Maf family. A divalent metal cation serves as cofactor.

The protein localises to the cytoplasm. It catalyses the reaction a ribonucleoside 5'-triphosphate + H2O = a ribonucleoside 5'-phosphate + diphosphate + H(+). The catalysed reaction is a 2'-deoxyribonucleoside 5'-triphosphate + H2O = a 2'-deoxyribonucleoside 5'-phosphate + diphosphate + H(+). Nucleoside triphosphate pyrophosphatase. May have a dual role in cell division arrest and in preventing the incorporation of modified nucleotides into cellular nucleic acids. This chain is Nucleoside triphosphate pyrophosphatase, found in Synechococcus sp. (strain JA-3-3Ab) (Cyanobacteria bacterium Yellowstone A-Prime).